A 342-amino-acid polypeptide reads, in one-letter code: Ferrochelatase (342 aa).

Residues His188 and Glu268 each contribute to the Fe cation site.

It belongs to the ferrochelatase family.

It localises to the cytoplasm. It catalyses the reaction heme b + 2 H(+) = protoporphyrin IX + Fe(2+). Its pathway is porphyrin-containing compound metabolism; protoheme biosynthesis; protoheme from protoporphyrin-IX: step 1/1. Its function is as follows. Catalyzes the ferrous insertion into protoporphyrin IX. The sequence is that of Ferrochelatase from Rickettsia conorii (strain ATCC VR-613 / Malish 7).